Here is a 457-residue protein sequence, read N- to C-terminus: MELSTVLLLLGLCSAGLVLGSEHETRLVAKLFEDYSSVVRPVEDHREIVQVTVGLQLIQLINVDEVNQIVTTNVRLKQQWVDYNLKWNPDDYGGVKKIHIPSEKIWRPDVVLYNNADGDFAIVKFTKVLLDYTGHITWTPPAIFKSYCEIIVTHFPFDEQNCSMKLGTWTYDGSVVAINPESDQPDLSNFMESGEWVIKEARGWKHWVFYSCCPTTPYLDITYHFVMQRLPLYFIVNVIIPCLLFSFLTSLVFYLPTDSGEKMTLSISVLLSLTVFLLVIVELIPSTSSAVPLIGKYMLFTMVFVIASIIITVIVINTHHRSPSTHIMPEWVRKVFIDTIPNIMFFSTMKRPSRDKQEKRIFTEDIDISDISGKPGPPPMGFHSPLIKHPEVKSAIEGVKYIAETMKSDQESNNAAEEWKYVAMVMDHILLGVFMLVCLIGTLAVFAGRLIELHQQG.

The N-terminal stretch at 1-20 is a signal peptide; sequence MELSTVLLLLGLCSAGLVLG. Over 21–230 the chain is Extracellular; sequence SEHETRLVAK…ITYHFVMQRL (210 aa). 2 disulfides stabilise this stretch: cysteine 148-cysteine 162 and cysteine 212-cysteine 213. Asparagine 161 is a glycosylation site (N-linked (GlcNAc...) asparagine). Transmembrane regions (helical) follow at residues 231-255, 263-281, and 297-316; these read PLYF…VFYL, MTLS…LVIV, and YMLF…VIVI. Residues 317–428 lie on the Cytoplasmic side of the membrane; sequence NTHHRSPSTH…WKYVAMVMDH (112 aa). The helical transmembrane segment at 429-447 threads the bilayer; that stretch reads ILLGVFMLVCLIGTLAVFA.

This sequence belongs to the ligand-gated ion channel (TC 1.A.9) family. Acetylcholine receptor (TC 1.A.9.1) subfamily. Alpha-1/CHRNA1 sub-subfamily. As to quaternary structure, one of the alpha chains that assemble within the acetylcholine receptor, a pentamer of two alpha chains, a beta, a delta, and a gamma (in immature muscle) or epsilon (in mature muscle) chains. The muscle heteropentamer composed of alpha-1, beta-1, delta, epsilon subunits interacts with the alpha-conotoxin ImII.

It localises to the postsynaptic cell membrane. The protein resides in the cell membrane. The enzyme catalyses K(+)(in) = K(+)(out). It catalyses the reaction Na(+)(in) = Na(+)(out). In terms of biological role, upon acetylcholine binding, the AChR responds by an extensive change in conformation that affects all subunits and leads to opening of an ion-conducting channel across the plasma membrane. In Mus musculus (Mouse), this protein is Acetylcholine receptor subunit alpha (Chrna1).